A 397-amino-acid chain; its full sequence is Succinate--CoA ligase [ADP-forming] subunit beta (397 aa).

The region spanning 9–254 is the ATP-grasp domain; the sequence is KALLRSYGAP…ETEEDPKELA (246 aa). ATP contacts are provided by residues Lys-46, 53 to 55, Glu-109, Ser-112, and Glu-117; that span reads GRG. Mg(2+)-binding residues include Asn-209 and Asp-223. Substrate-binding positions include Asn-274 and 331-333; that span reads GIM.

It belongs to the succinate/malate CoA ligase beta subunit family. As to quaternary structure, heterotetramer of two alpha and two beta subunits. Mg(2+) is required as a cofactor.

It catalyses the reaction succinate + ATP + CoA = succinyl-CoA + ADP + phosphate. It carries out the reaction GTP + succinate + CoA = succinyl-CoA + GDP + phosphate. It functions in the pathway carbohydrate metabolism; tricarboxylic acid cycle; succinate from succinyl-CoA (ligase route): step 1/1. Its function is as follows. Succinyl-CoA synthetase functions in the citric acid cycle (TCA), coupling the hydrolysis of succinyl-CoA to the synthesis of either ATP or GTP and thus represents the only step of substrate-level phosphorylation in the TCA. The beta subunit provides nucleotide specificity of the enzyme and binds the substrate succinate, while the binding sites for coenzyme A and phosphate are found in the alpha subunit. The protein is Succinate--CoA ligase [ADP-forming] subunit beta of Cereibacter sphaeroides (strain ATCC 17025 / ATH 2.4.3) (Rhodobacter sphaeroides).